A 678-amino-acid chain; its full sequence is Chloride channel protein ClC-Kb (678 aa).

Over 1–50 the chain is Cytoplasmic; it reads MEELVGLREGSSGNPVALRELWSPCPRLRRGIRGGLEWLKQKLFRVGEDW. The next 2 membrane-spanning stretches (helical) occupy residues 51–82 and 91–111; these read YFLM…KWLY and LRYL…SGFS. An intramembrane region (helical) is located at residues 116–127; that stretch reads PFSGGSGIPELK. Residue Ser121 coordinates chloride. 2 consecutive transmembrane segments (helical) span residues 141–160 and 161–180; these read IKNF…TGST and LFLG…AAYL. The helical intramembrane region spans 203 to 224; the sequence is AGAAVGVATVFAAPFSGVLFCI. Residues 236-255 traverse the membrane as a helical segment; that stretch reads YWRGFFAATCGAFMFRLLAV. Ca(2+) is bound by residues Glu259, Glu261, Asp278, and Glu281. The next 2 helical transmembrane spans lie at 282–310 and 325–342; these read IFFF…LAFT and PLYA…TYPP. The segment at residues 349 to 360 is an intramembrane region (helical); it reads ASRLSMREHLDT. Asn364 carries an N-linked (GlcNAc...) asparagine glycan. 2 helical membrane-spanning segments follow: residues 400-420 and 421-440; these read GTLA…TTIP and MPAG…GRLL. A chloride-binding site is contributed by Phe426. Residues 464–496 constitute an intramembrane region (helical); the sequence is GGYALAGAAAFSGAVTHSISTALLAFELTGQIV. Residues 500 to 520 traverse the membrane as a helical segment; that stretch reads PVLMAVLAANAIAQSCQPSFY. The Cytoplasmic portion of the chain corresponds to 521 to 678; that stretch reads DGTIMVKKLP…SWVERQHTGF (158 aa). 2 consecutive CBS domains span residues 551–612 and 620–678; these read MRRA…ARAS and DILA…HTGF.

It belongs to the chloride channel (TC 2.A.49) family. CLCNKB subfamily. As to quaternary structure, homodimer. Interacts with BSND. In terms of processing, N-glycosylated. In terms of tissue distribution, expressed predominantly in the kidney.

It is found in the basolateral cell membrane. The catalysed reaction is chloride(in) = chloride(out). It catalyses the reaction iodide(out) = iodide(in). The enzyme catalyses nitrate(in) = nitrate(out). It carries out the reaction bromide(in) = bromide(out). Its function is as follows. Anion-selective channel permeable to small monovalent anions with ion selectivity for chloride &gt; bromide &gt; nitrate &gt; iodide. Forms a homodimeric channel where each subunit has its own ion conduction pathway. May conduct double-barreled currents controlled by two types of gates, two fast gates that control each subunit independently and a slow common gate that opens and shuts off both subunits simultaneously. Assembles with the regulatory subunit BSND/Barttin for sorting at the basolateral plasma membrane domain and functional switch to the ion conducting state. CLCNKB:BSND channels display mostly a linear current-voltage relationship controlled by common gate. Mediates chloride conductance along nephron segments, namely the thick ascending limb of Henle's loop, convoluted tubule and the collecting duct, contributing to the maintenance of systemic acid-base and electrolyte homeostasis. Conducts chloride currents in the stria vascularis of the inner ear to establish the endocochlear potential necessary for normal hearing. The protein is Chloride channel protein ClC-Kb (CLCNKB) of Oryctolagus cuniculus (Rabbit).